The sequence spans 347 residues: MLTNPSQVIIRNQDSLSQHKVLVLNHEADLLPKALLDVAASVDALALDYHHYLHLAPHANTKLRCYFGHDLPHQDPLEREKYDTVIVYFPKAKPLAPYLFNLAANHLVPNGQLLVVGENKGGIKSLVKLLPEYFATGMKLDNARHCLLFGSSLEGSAPAMKLSDWVSQYQLTTPQGEISICNLVGVFSEKRLDLGTELLLSHLPTLSGRVLDFGCGAGVIAAALLKAQPSLSLECVDINAMALASCELTLAANGMTAKVYPSDGLAQTTGKFNGIISNPPFHDGLASTTSIAQNFVTDSAKQLQHNGIWQIVANRHLPYSDIIAAEFGQLKVVADNNKYKLYYFQHK.

It belongs to the methyltransferase superfamily. RsmC family. As to quaternary structure, monomer.

It is found in the cytoplasm. The catalysed reaction is guanosine(1207) in 16S rRNA + S-adenosyl-L-methionine = N(2)-methylguanosine(1207) in 16S rRNA + S-adenosyl-L-homocysteine + H(+). Functionally, specifically methylates the guanine in position 1207 of 16S rRNA in the 30S particle. The sequence is that of Ribosomal RNA small subunit methyltransferase C from Shewanella baltica (strain OS155 / ATCC BAA-1091).